The primary structure comprises 247 residues: Ribonuclease PH (247 aa).

Phosphate is bound by residues R90 and 128–130 (GTR).

The protein belongs to the RNase PH family. As to quaternary structure, homohexameric ring arranged as a trimer of dimers.

The enzyme catalyses tRNA(n+1) + phosphate = tRNA(n) + a ribonucleoside 5'-diphosphate. Phosphorolytic 3'-5' exoribonuclease that plays an important role in tRNA 3'-end maturation. Removes nucleotide residues following the 3'-CCA terminus of tRNAs; can also add nucleotides to the ends of RNA molecules by using nucleoside diphosphates as substrates, but this may not be physiologically important. Probably plays a role in initiation of 16S rRNA degradation (leading to ribosome degradation) during starvation. This chain is Ribonuclease PH, found in Synechococcus sp. (strain CC9605).